A 338-amino-acid polypeptide reads, in one-letter code: MASPKDFISPVNSGQKLVYPFRNYLNYLHDKYSDLQTGKIADYIPELALAAPQWFGISVITTDGQIFEVGDCQQTFTVQSISKAFVFGLALEDHGREYVNSKVGVEPTGEAFNSIILDEKTNRPYNPMVNAGAIATTDLITGQNATERLKRILEMFKRYTGRDHEINVPVFLSEKSTGNRNRAMAYLMLNFGMVSDKIEETLDLYCQQCAILVHAHDLALMAATLANGGVNPITGIRAIDEHYVQDVISVMLTCGMYDASGEWAYRVGLPAKSGVGGGITAVVPHQLGIGTFSPLLDEKGNSIRGVKICQNISEDFGLHLFNVAKPERDLKTWLEGNS.

The substrate site is built by Ser80, Asn130, Glu174, Asn181, Tyr205, Tyr257, and Val275.

The protein belongs to the glutaminase family. As to quaternary structure, homotetramer.

The enzyme catalyses L-glutamine + H2O = L-glutamate + NH4(+). The polypeptide is Glutaminase (Microcystis aeruginosa (strain NIES-843 / IAM M-2473)).